A 251-amino-acid polypeptide reads, in one-letter code: Cell division protein ZapD (251 aa).

The protein belongs to the ZapD family. Interacts with FtsZ.

The protein localises to the cytoplasm. Its function is as follows. Cell division factor that enhances FtsZ-ring assembly. Directly interacts with FtsZ and promotes bundling of FtsZ protofilaments, with a reduction in FtsZ GTPase activity. In Burkholderia lata (strain ATCC 17760 / DSM 23089 / LMG 22485 / NCIMB 9086 / R18194 / 383), this protein is Cell division protein ZapD.